The following is a 379-amino-acid chain: Mannitol-1-phosphate 5-dehydrogenase (379 aa).

3-14 (AVHFGAGNIGRG) provides a ligand contact to NAD(+).

Belongs to the mannitol dehydrogenase family.

The enzyme catalyses D-mannitol 1-phosphate + NAD(+) = beta-D-fructose 6-phosphate + NADH + H(+). The chain is Mannitol-1-phosphate 5-dehydrogenase from Anoxybacillus flavithermus (strain DSM 21510 / WK1).